Reading from the N-terminus, the 103-residue chain is UPF0473 protein SSA_2239 (103 aa).

Belongs to the UPF0473 family.

The chain is UPF0473 protein SSA_2239 from Streptococcus sanguinis (strain SK36).